Reading from the N-terminus, the 464-residue chain is uncharacterized protein (464 aa).

Transmembrane regions (helical) follow at residues valine 7–leucine 27, leucine 37–alanine 57, valine 94–proline 114, phenylalanine 121–glycine 141, alanine 153–phenylalanine 173, leucine 196–alanine 216, phenylalanine 231–valine 251, valine 282–proline 302, valine 329–leucine 349, leucine 359–isoleucine 379, methionine 401–isoleucine 421, and phenylalanine 432–phenylalanine 452.

It belongs to the amino acid-polyamine-organocation (APC) superfamily.

The protein resides in the cell membrane. This is an uncharacterized protein from Legionella pneumophila subsp. pneumophila (strain Philadelphia 1 / ATCC 33152 / DSM 7513).